A 187-amino-acid chain; its full sequence is Large ribosomal subunit protein bL21 (187 aa).

Positions 157-187 (KVAKKAVKKTVKKATKTGAKKKAAKKTSKKA) are disordered.

The protein belongs to the bacterial ribosomal protein bL21 family. In terms of assembly, part of the 50S ribosomal subunit. Contacts protein L20.

Its function is as follows. This protein binds to 23S rRNA in the presence of protein L20. This chain is Large ribosomal subunit protein bL21, found in Bdellovibrio bacteriovorus (strain ATCC 15356 / DSM 50701 / NCIMB 9529 / HD100).